Reading from the N-terminus, the 452-residue chain is Zinc finger protein GAI-ASSOCIATED FACTOR 1 (452 aa).

The segment covering 1-32 has biased composition (polar residues); it reads MPVDLDNSSTVSGEASVSISSTGNQNPLPNST. A disordered region spans residues 1–47; that stretch reads MPVDLDNSSTVSGEASVSISSTGNQNPLPNSTGKKKRNLPGMPDPES. Ser53 bears the Phosphoserine mark. 2 C2H2-type zinc fingers span residues 63-85 and 104-134; these read FVCE…RRGH and YVCP…CRKH. Positions 126 to 133 match the Nuclear localization signal motif; sequence IKKHFCRK. A C2H2-type 2; degenerate zinc finger spans residues 139–162; that stretch reads WKCDKCSKKYAVQSDWKAHSKICG. Zn(2+)-binding residues include Cys141, Cys144, His157, Cys161, Cys168, Cys170, His183, and Cys187. A CCHC-type 2; atypical zinc finger spans residues 166–189; it reads YKCDCGTLFSRRDSFITHRAFCDA. An SHR-binding region spans residues 176 to 188; the sequence is RRDSFITHRAFCD. Positions 196 to 254 are disordered; sequence RSHHSQSKKQNPEILTRKNPVPNPVPAPVDTESAKIKSSSTLTIKQSESPKTPPEIVQE. Residues 231 to 245 are compositionally biased toward polar residues; sequence IKSSSTLTIKQSESP.

In terms of assembly, interacts with the DELLA proteins (e.g. GAI/RGA2, RGA, RGL1, RGL2 and RGLG3), acting as coactivators and with TPR1 and TPR4, acting as a corepressors, at the promoter of GA20OX2 gene. As to expression, observed in vegetative tissues. Mainly expressed in hypocotyls, petioles, shoot apices, root tips, and trichomes, and, at low levels, in leaves, stems and flowers.

The protein localises to the nucleus. Its activity is regulated as follows. Transcription activation is repressed by gibberellic acid GA(3) in the presence of TPR4. Functionally, transcription factor that acts as a positive regulator of gibberellin (GA) action, homeostasis and signaling. GA converts the GAF1 complex from transcriptional activator to repressor via the degradation of DELLA proteins. In Arabidopsis thaliana (Mouse-ear cress), this protein is Zinc finger protein GAI-ASSOCIATED FACTOR 1.